Reading from the N-terminus, the 514-residue chain is 2,3-bisphosphoglycerate-independent phosphoglycerate mutase (514 aa).

Residues D14 and S64 each coordinate Mn(2+). S64 serves as the catalytic Phosphoserine intermediate. Substrate-binding positions include H125, 155–156, R187, R193, 263–266, and K336; these read RD and RADR. Residues D403, H407, D444, H445, and H463 each coordinate Mn(2+).

Belongs to the BPG-independent phosphoglycerate mutase family. As to quaternary structure, monomer. It depends on Mn(2+) as a cofactor.

The catalysed reaction is (2R)-2-phosphoglycerate = (2R)-3-phosphoglycerate. It functions in the pathway carbohydrate degradation; glycolysis; pyruvate from D-glyceraldehyde 3-phosphate: step 3/5. Its function is as follows. Catalyzes the interconversion of 2-phosphoglycerate and 3-phosphoglycerate. This is 2,3-bisphosphoglycerate-independent phosphoglycerate mutase from Salmonella paratyphi A (strain ATCC 9150 / SARB42).